The following is a 1285-amino-acid chain: MNLYLLLLVIATSSWQFVAGLECPVECTCDKKGLVVDCSSSGLTRIPKNISRNVRSLVIRNNRIHKLKRSDLEGFNQLETLVLTHNKIKIIEENVLDHLPELKRLSLAHNELVYIPPLCSDSRPLASLNLKRNHIQFIDEQVLRYFPDLTQLDFSHNRIQSLRTKLFDNLPALSHAHLHSNPWHCDCRASKVKALLQKVKWEKKVYCTNPVELRHQALDEVDDSALTCARPAEESWTGEEIKLTCAKNSSSKLVVWMYENVEVDSSSLDGYEIHDTVITVPRKTNVNFMTCTYDFDHIPHHRRLRQSQHQGNGSPQFTYKPRDNSFREGSEVKVNCEVMGNPKPTINWYHNGKRFISSRKRQLGLSNNVLRIYPFLEEDSGRYTCEAVNSVGKVRHAFSLDLISSVPPNIYEGPQSVSQNLGGSVVFVCKANGNPVPDYTWSFDGSTIGHIKGRFMVSDDGTELRISNIEKKDEGYYSCMAGNPVGAMSADAKLTVIGGETRKAAAPQIDEELLRAIAQKARQNVENAVEKTRKQLTQDKVTNTNDLKRLFRFSTPKQAVELSKAREIYEESVRLVREHVEKGLILNVDELHPKNVSYESVLHVTHVQALMGLSGCHTGQYKNPCTDTCFHHRYRSFDGQCNNKNKPMTGVSLMPLRRLLKPVYENGFNTPVGWEKGRLYNGYPLPNVREVSRQLVATENITPHSKLSSMVMQWGQFVDHDLTHTVTALSRHSYATGAFCNRTCENLDPCFNIPLSPNDPRVKSGSAKYPCIEFERSAAVCGSGETSLVFNRVTYREQMNALTSFLDASNVYGSNEVQAQELRDTYNNNGMLRFDITSEAGKEYLPFEKDSNMDCRRNFSEENPIRCFLAGDLRANEQLALAATHTIFIREHNRIAKKLKSMNGNWDGEIIYHETRKIVGAMMQHITYKHWMPIIFGGQAQMNKFVGTYQGYDPDVDASVTNAFATAAFRFGHTIINPSLFRLGNDFMPIKEGHIALHKAFFTPELVLTQGGVDPLLRGLFASPLKHPMPTQLLNMELIEKLFMKGHEVSLDLAVMNIQRSRDHGLPSYTEYRKFCNLPVPVQWEDMKGYIKDDMIIQKLRGLYGVPQNIDLWVGGIVEEKLENGLFGPTFACIIGEQFRKIRDGDRFWYEKDGVFTPEQLREIKKITLARLFCDNGDNIDRIQKDVFMYPGMDKENYGTCQETEMMNLRAWSKCCDNVCPTMLDRILRSRHRGSRLHGCNQNGIWRPEGAKWIPQNEICTECVCQGSRVWCSTKEDCSDNRSPF.

The N-terminal stretch at 1–20 is a signal peptide; sequence MNLYLLLLVIATSSWQFVAG. The LRRNT domain occupies 21–53; it reads LECPVECTCDKKGLVVDCSSSGLTRIPKNISRN. LRR repeat units follow at residues 27-49, 50-72, 73-96, 97-120, 122-143, 145-168, and 204-227; these read CTCDKKGLVVDCSSSGLTRIPKN, ISRNVRSLVIRNNRIHKLKRSDL, EGFNQLETLVLTHNKIKIIEENVL, DHLPELKRLSLAHNELVYIPPLCS, SRPLASLNLKRNHIQFIDEQVL, YFPDLTQLDFSHNRIQSLRTKLFD, and KVYCTNPVELRHQALDEVDDSALT. A glycan (N-linked (GlcNAc...) asparagine) is linked at Asn49. An LRRCT domain is found at 180-228; the sequence is SNPWHCDCRASKVKALLQKVKWEKKVYCTNPVELRHQALDEVDDSALTC. Asn248 is a glycosylation site (N-linked (GlcNAc...) asparagine). Residues 305–324 form a disordered region; that stretch reads RQSQHQGNGSPQFTYKPRDN. Residues 307 to 317 show a composition bias toward polar residues; it reads SQHQGNGSPQF. Ig-like C2-type domains are found at residues 315–401 and 408–495; these read PQFT…FSLD and PNIY…AKLT. 2 disulfide bridges follow: Cys336–Cys385 and Cys429–Cys479. A coiled-coil region spans residues 508–550; the sequence is QIDEELLRAIAQKARQNVENAVEKTRKQLTQDKVTNTNDLKRL. Asn595 carries an N-linked (GlcNAc...) asparagine glycan. The cysteines at positions 625 and 641 are disulfide-linked. Residue Asp719 coordinates heme b. Residue His720 is the Proton acceptor of the active site. A Ca(2+)-binding site is contributed by Asp721. 2 disulfides stabilise this stretch: Cys740-Cys750 and Cys744-Cys771. Asn741 carries N-linked (GlcNAc...) asparagine glycosylation. The Ca(2+) site is built by Thr803, Phe805, Asp807, and Ser809. Asn858 carries an N-linked (GlcNAc...) asparagine glycan. Glu877 and His973 together coordinate heme b. LRR repeat units follow at residues 998–1022 and 1049–1073; these read HKAFFTPELVLTQGGVDPLLRGLFA and VSLDLAVMNIQRSRDHGLPSYTEYR. 2 cysteine pairs are disulfide-bonded: Cys1076-Cys1133 and Cys1174-Cys1201. The LRR 12 repeat unit spans residues 1168 to 1189; that stretch reads TLARLFCDNGDNIDRIQKDVFM.

The protein belongs to the peroxidase family. XPO subfamily. It depends on Ca(2+) as a cofactor. Heme b serves as cofactor. As to expression, expressed in the ventral nerve cord, the dorsal nerve cord, head neurons, GABAergic and cholinergic neurons, body wall muscles, vulval muscles, uterine muscles, intestine, the hypodermis and in coelomocytes.

It localises to the secreted. It is found in the extracellular space. Its subcellular location is the extracellular matrix. The catalysed reaction is L-lysyl-[collagen] + L-methionyl-[collagen] + H2O2 = [collagen]-L-lysyl-N-S-L-methionyl-[collagen] + 2 H2O + H(+). It catalyses the reaction bromide + H2O2 = hypobromite + H2O. It carries out the reaction L-lysyl-[collagen] + L-methionyl-[collagen] + hypobromite = [collagen]-L-lysyl-N-S-L-methionyl-[collagen] + bromide + H2O + H(+). The enzyme catalyses L-tyrosyl-[protein] + bromide + H2O2 + H(+) = 3-bromo-L-tyrosyl-[protein] + 2 H2O. The catalysed reaction is hypobromite + L-tyrosyl-[protein] + H(+) = 3-bromo-L-tyrosyl-[protein] + H2O. Catalyzes the two-electron oxidation of bromide by hydrogen peroxide and generates hypobromite as a reactive intermediate which mediates the formation of sulfilimine cross-links between methionine and hydroxylysine residues within an uncross-linked collagen IV NC1 hexamer. Plays a role in the attachment of tissues and in axonal guidance during early developmental stages. May functionally antagonize the peroxidasin pxn-2 to maintain neuronal development. The polypeptide is Peroxidasin homolog pxn-1 (Caenorhabditis elegans).